Here is a 311-residue protein sequence, read N- to C-terminus: Linearmycin resistance ATP-binding protein LnrL (311 aa).

An ABC transporter domain is found at 2-232 (LQAENIKKAY…LGGDTIIQLT (231 aa)). 34–41 (GPNGAGKS) provides a ligand contact to ATP.

This sequence belongs to the ABC transporter superfamily. As to quaternary structure, the complex is composed of two ATP-binding proteins (LnrL) and two transmembrane proteins (LnrM and LnrN).

Functionally, required for resistance to linearmycins, a family of antibiotic-specialized metabolites produced by some streptomycetes. Part of the ABC transporter complex LnrLMN that probably facilitates linearmycin removal from the membrane. Responsible for energy coupling to the transport system. Also mediates KinC-dependent biofilm morphology. This is Linearmycin resistance ATP-binding protein LnrL from Bacillus subtilis (strain 168).